The primary structure comprises 258 residues: Thiazole synthase 2 (258 aa).

The active-site Schiff-base intermediate with DXP is the Lys97. 1-deoxy-D-xylulose 5-phosphate-binding positions include Gly158, 184 to 185, and 206 to 207; these read AG and NT.

Belongs to the ThiG family. As to quaternary structure, homotetramer. Forms heterodimers with either ThiH or ThiS.

It localises to the cytoplasm. It catalyses the reaction [ThiS sulfur-carrier protein]-C-terminal-Gly-aminoethanethioate + 2-iminoacetate + 1-deoxy-D-xylulose 5-phosphate = [ThiS sulfur-carrier protein]-C-terminal Gly-Gly + 2-[(2R,5Z)-2-carboxy-4-methylthiazol-5(2H)-ylidene]ethyl phosphate + 2 H2O + H(+). Its pathway is cofactor biosynthesis; thiamine diphosphate biosynthesis. In terms of biological role, catalyzes the rearrangement of 1-deoxy-D-xylulose 5-phosphate (DXP) to produce the thiazole phosphate moiety of thiamine. Sulfur is provided by the thiocarboxylate moiety of the carrier protein ThiS. In vitro, sulfur can be provided by H(2)S. The protein is Thiazole synthase 2 of Syntrophotalea carbinolica (strain DSM 2380 / NBRC 103641 / GraBd1) (Pelobacter carbinolicus).